A 111-amino-acid polypeptide reads, in one-letter code: Disintegrin lebein-1-alpha (111 aa).

Residues M1 to S20 form the signal peptide. The propeptide occupies I21 to M47. One can recognise a Disintegrin domain in the interval M47–D111. 4 disulfides stabilise this stretch: C53–C76, C67–C73, C72–C97, and C85–C104. The Cell attachment site motif lies at R89–D91.

Belongs to the disintegrin family. Dimeric disintegrin subfamily. In terms of assembly, heterodimer with subunit beta; disulfide-linked. As to expression, expressed by the venom gland.

It localises to the secreted. Strongly inhibits ADP-induced platelet aggregation on human platelet-rich plasma. Also avidly binds to the laminin-binding beta-1 integrins (alpha-3/beta-1, alpha-6/beta-1, and alpha-7/beta-1) in an RGD-independent manner. The sequence is that of Disintegrin lebein-1-alpha from Macrovipera lebetinus (Levantine viper).